The chain runs to 185 residues: Calcium-binding protein K-like (185 aa).

EF-hand domains lie at 60–95 and 96–131; these read WDEA…MTRA and PTTD…VVVC. Ca(2+)-binding residues include aspartate 73, aspartate 75, asparagine 77, glutamate 84, aspartate 109, aspartate 111, serine 113, tyrosine 115, and glutamate 120.

The protein belongs to the recoverin family.

This is Calcium-binding protein K-like from Dictyostelium discoideum (Social amoeba).